The following is a 59-amino-acid chain: Conorfamide-Vc1 (59 aa).

The signal sequence occupies residues 1 to 19 (MSGRGFLLLALLLLVTVEA). Positions 20–25 (TKVEKK) are excised as a propeptide. The segment at 32-39 (AWSGPRNR) is positively charged region crucial for activity against MRGPRX1 receptors. The residue at position 43 (F43) is a Phenylalanine amide. A propeptide spanning residues 45–59 (RRDMQSPLLSERLRL) is cleaved from the precursor.

It belongs to the FARP (FMRFamide related peptide) family. As to expression, expressed by the venom duct.

It is found in the secreted. Functionally, this peptide activates human and mouse sensory neuron-specific G-protein coupled receptors MRGPRX1. The activity on human receptors has been measured (EC(50)=1.8 uM). Compared with the agonist chloroquine (anti-malaria drug), it is 200-fold more potent. The peptide also causes an increase in cytosolic calcium in a specific subset of DRG neurons, and, in contrast to other Conus venom peptides, the peptide also affects a large fraction of the non-neuronal cells. In vivo, when intracranially injected into mice, it principally renders mice unable to move, and at very low doses, it causes hyperactivity. It also induces itch sensation, since intradermal cheek injection into humanized transgenic mouse (mouse MRGPRX1 replaced by human MRGPRX1) induces scratching. In vivo, when tested at high doses (10 uM) on zebrafish larvae, it induces a range of behavioral effects ranging from an early hypoactivity during the first hour of treatment to an increase in movement during the following hours when the larvae are submitted to strobe light phases. The sequence is that of Conorfamide-Vc1 from Conus victoriae (Queen Victoria cone).